A 426-amino-acid chain; its full sequence is Histidinol dehydrogenase (426 aa).

Positions 125, 187, and 210 each coordinate NAD(+). The substrate site is built by serine 233, glutamine 255, and histidine 258. Glutamine 255 and histidine 258 together coordinate Zn(2+). Residues glutamate 323 and histidine 324 each act as proton acceptor in the active site. Substrate contacts are provided by histidine 324, aspartate 357, glutamate 411, and histidine 416. Aspartate 357 contributes to the Zn(2+) binding site. Position 416 (histidine 416) interacts with Zn(2+).

The protein belongs to the histidinol dehydrogenase family. Requires Zn(2+) as cofactor.

The enzyme catalyses L-histidinol + 2 NAD(+) + H2O = L-histidine + 2 NADH + 3 H(+). The protein operates within amino-acid biosynthesis; L-histidine biosynthesis; L-histidine from 5-phospho-alpha-D-ribose 1-diphosphate: step 9/9. In terms of biological role, catalyzes the sequential NAD-dependent oxidations of L-histidinol to L-histidinaldehyde and then to L-histidine. This Methanothermobacter thermautotrophicus (strain ATCC 29096 / DSM 1053 / JCM 10044 / NBRC 100330 / Delta H) (Methanobacterium thermoautotrophicum) protein is Histidinol dehydrogenase (hisD).